Here is a 463-residue protein sequence, read N- to C-terminus: Glutamate--tRNA ligase (463 aa).

The 'HIGH' region motif lies at 10–20; that stretch reads PSPTGHLHIGG. A 'KMSKS' region motif is present at residues 236-240; that stretch reads KLSKR. Lys-239 lines the ATP pocket.

The protein belongs to the class-I aminoacyl-tRNA synthetase family. Glutamate--tRNA ligase type 1 subfamily. As to quaternary structure, monomer.

Its subcellular location is the cytoplasm. It catalyses the reaction tRNA(Glu) + L-glutamate + ATP = L-glutamyl-tRNA(Glu) + AMP + diphosphate. In terms of biological role, catalyzes the attachment of glutamate to tRNA(Glu) in a two-step reaction: glutamate is first activated by ATP to form Glu-AMP and then transferred to the acceptor end of tRNA(Glu). In Nitratidesulfovibrio vulgaris (strain ATCC 29579 / DSM 644 / CCUG 34227 / NCIMB 8303 / VKM B-1760 / Hildenborough) (Desulfovibrio vulgaris), this protein is Glutamate--tRNA ligase.